Here is a 177-residue protein sequence, read N- to C-terminus: Translation initiation factor IF-3 (177 aa).

This sequence belongs to the IF-3 family. In terms of assembly, monomer.

Its subcellular location is the cytoplasm. Functionally, IF-3 binds to the 30S ribosomal subunit and shifts the equilibrium between 70S ribosomes and their 50S and 30S subunits in favor of the free subunits, thus enhancing the availability of 30S subunits on which protein synthesis initiation begins. The chain is Translation initiation factor IF-3 from Elusimicrobium minutum (strain Pei191).